We begin with the raw amino-acid sequence, 467 residues long: MMNKKNNKYKSDSLDSKEDKVDLYQDAMISNLISVNNKSTSDSDAKKPTENRIELLKNAYKGGTLKPMIDFDDHNTETFMDKRITKNLLDARSLFLSMGVKLIYIKSGTTGHTFKAISRSNKNVVFAVKVCAYPKDDYGGIKSSSRPENVEIRMLKILSYFVVNRLTPHLVLPIGTFHTDIEKFINIPEGVIDLKDEKNDMYKKFIERYHDGEFEKFVSVLISEWCNGGDLLDYIRKNYDSMTLETWTVVIFQLLFTLALIHEKFPAFRHNDMKANNILVEKTDNKHEGPDKWYRYSLGSHVFIIPGIGIQIKIWDFDFASIDGIVENKKVNADWTKKINISKKKNMYYDMHYFFNTLISKRFFPQFYEGGVPQEIVDFVHRIVPEEFRNGSDNINKKGRILVDVEYTTPFKVIMTDPLFEKYRYNQYYFHPQRNMAPKKSILFQQGNGSKQPVPKKSTGQKPTKKV.

A Protein kinase domain is found at 99–467; it reads GVKLIYIKSG…STGQKPTKKV (369 aa). Residues 105–113 and Lys129 contribute to the ATP site; that span reads IKSGTTGHT. Asp272 functions as the Proton acceptor in the catalytic mechanism. Residues 443–467 are disordered; it reads LFQQGNGSKQPVPKKSTGQKPTKKV. The segment covering 458 to 467 has biased composition (polar residues); that stretch reads STGQKPTKKV.

Belongs to the protein kinase superfamily. Ser/Thr protein kinase family.

It is found in the virion. The catalysed reaction is L-seryl-[protein] + ATP = O-phospho-L-seryl-[protein] + ADP + H(+). It catalyses the reaction L-threonyl-[protein] + ATP = O-phospho-L-threonyl-[protein] + ADP + H(+). The sequence is that of Putative serine/threonine-protein kinase R400 from Acanthamoeba polyphaga mimivirus (APMV).